The sequence spans 523 residues: Pentatricopeptide repeat-containing protein At1g64580 (523 aa).

13 PPR repeats span residues 43-77 (HHHH…RPIP), 78-112 (SIVD…GISH), 113-147 (DLYS…GFRP), 148-182 (SIVT…GFVP), 183-217 (NVVI…GIRA), 218-252 (DAVT…KIDP), 253-287 (NVIF…SVVP), 288-322 (NVFT…GCFP), 323-357 (DVVT…GLVG), 358-392 (DAFT…GVSP), 393-427 (DIVT…EMDV), 428-462 (DIIT…GVKP), and 463-497 (DAIA…GFMP).

It belongs to the PPR family. P subfamily.

This chain is Pentatricopeptide repeat-containing protein At1g64580, found in Arabidopsis thaliana (Mouse-ear cress).